Consider the following 129-residue polypeptide: UPF0325 protein ESA_03178 (129 aa).

This sequence belongs to the UPF0325 family.

This is UPF0325 protein ESA_03178 from Cronobacter sakazakii (strain ATCC BAA-894) (Enterobacter sakazakii).